Consider the following 361-residue polypeptide: DNA double-strand break repair protein Mre11 (361 aa).

The Mn(2+) site is built by Asp7, His9, Asp48, and Asn83. His84 acts as the Proton donor in catalysis. Residues His176, His204, and His206 each coordinate Mn(2+).

Belongs to the MRE11/RAD32 family. In terms of assembly, homodimer. Forms a heterotetramer composed of two Mre11 subunits and two Rad50 subunits. It depends on Mn(2+) as a cofactor.

Nuclease activity is regulated by Rad50. Functionally, part of the Rad50/Mre11 complex, which is involved in the early steps of DNA double-strand break (DSB) repair. The complex may facilitate opening of the processed DNA ends to aid in the recruitment of HerA and NurA. Mre11 binds to DSB ends and has both double-stranded 3'-5' exonuclease activity and single-stranded endonuclease activity. The protein is DNA double-strand break repair protein Mre11 of Nanoarchaeum equitans (strain Kin4-M).